Reading from the N-terminus, the 193-residue chain is Phosphoheptose isomerase (193 aa).

Residues 37–193 (LADSFKAGGK…QLIEKEMVKA (157 aa)) form the SIS domain. A substrate-binding site is contributed by 52–54 (NGG). Zn(2+) is bound by residues H61 and E65. Substrate is bound by residues E65, 93–94 (ND), 119–121 (STS), S124, and Q172. Zn(2+)-binding residues include Q172 and H180.

It belongs to the SIS family. GmhA subfamily. As to quaternary structure, homotetramer. It depends on Zn(2+) as a cofactor.

It is found in the cytoplasm. It carries out the reaction 2 D-sedoheptulose 7-phosphate = D-glycero-alpha-D-manno-heptose 7-phosphate + D-glycero-beta-D-manno-heptose 7-phosphate. It participates in carbohydrate biosynthesis; D-glycero-D-manno-heptose 7-phosphate biosynthesis; D-glycero-alpha-D-manno-heptose 7-phosphate and D-glycero-beta-D-manno-heptose 7-phosphate from sedoheptulose 7-phosphate: step 1/1. It functions in the pathway bacterial outer membrane biogenesis; LPS core biosynthesis. Functionally, catalyzes the isomerization of sedoheptulose 7-phosphate in D-glycero-D-manno-heptose 7-phosphate. The sequence is that of Phosphoheptose isomerase from Yersinia pestis.